The chain runs to 450 residues: Phosphoglucosamine mutase 2 (450 aa).

The Phosphoserine intermediate role is filled by Ser101. Mg(2+) contacts are provided by Ser101, Asp245, Asp247, and Asp249. The residue at position 101 (Ser101) is a Phosphoserine.

This sequence belongs to the phosphohexose mutase family. Mg(2+) is required as a cofactor. Post-translationally, activated by phosphorylation.

The enzyme catalyses alpha-D-glucosamine 1-phosphate = D-glucosamine 6-phosphate. Catalyzes the conversion of glucosamine-6-phosphate to glucosamine-1-phosphate. The sequence is that of Phosphoglucosamine mutase 2 from Shewanella baltica (strain OS185).